The chain runs to 160 residues: Cyclic pyranopterin monophosphate synthase (160 aa).

Residues 77 to 79 and 114 to 115 each bind substrate; these read MCH and ME. The active site involves aspartate 129.

This sequence belongs to the MoaC family. Homohexamer; trimer of dimers.

The enzyme catalyses (8S)-3',8-cyclo-7,8-dihydroguanosine 5'-triphosphate = cyclic pyranopterin phosphate + diphosphate. It functions in the pathway cofactor biosynthesis; molybdopterin biosynthesis. In terms of biological role, catalyzes the conversion of (8S)-3',8-cyclo-7,8-dihydroguanosine 5'-triphosphate to cyclic pyranopterin monophosphate (cPMP). In Listeria monocytogenes serovar 1/2a (strain ATCC BAA-679 / EGD-e), this protein is Cyclic pyranopterin monophosphate synthase.